The primary structure comprises 447 residues: Cobyrinate a,c-diamide synthase (447 aa).

A GATase cobBQ-type domain is found at 252 to 439 (KIAIAFDESF…AHQHAVGNPY (188 aa)). The active-site Nucleophile is C331.

This sequence belongs to the CobB/CbiA family. Mg(2+) is required as a cofactor.

The enzyme catalyses cob(II)yrinate + 2 L-glutamine + 2 ATP + 2 H2O = cob(II)yrinate a,c diamide + 2 L-glutamate + 2 ADP + 2 phosphate + 2 H(+). It carries out the reaction Ni-sirohydrochlorin + 2 L-glutamine + 2 ATP + 2 H2O = Ni-sirohydrochlorin a,c-diamide + 2 L-glutamate + 2 ADP + 2 phosphate + 2 H(+). The protein operates within cofactor biosynthesis; adenosylcobalamin biosynthesis; cob(II)yrinate a,c-diamide from sirohydrochlorin (anaerobic route): step 10/10. Functionally, catalyzes the ATP-dependent amidation of the two carboxylate groups at positions a and c of cobyrinate, using either L-glutamine or ammonia as the nitrogen source. Involved in the biosynthesis of the unique nickel-containing tetrapyrrole coenzyme F430, the prosthetic group of methyl-coenzyme M reductase (MCR), which plays a key role in methanogenesis and anaerobic methane oxidation. Catalyzes the ATP-dependent amidation of the two carboxylate groups at positions a and c of Ni-sirohydrochlorin, using L-glutamine or ammonia as the nitrogen source. This chain is Cobyrinate a,c-diamide synthase, found in Methanococcus vannielii (strain ATCC 35089 / DSM 1224 / JCM 13029 / OCM 148 / SB).